Here is a 223-residue protein sequence, read N- to C-terminus: Ribonuclease T (223 aa).

The region spanning 20–194 (VVIDVETAGF…YDTEQTALLF (175 aa)) is the Exonuclease domain. Residues D23, E25, H181, and D186 each coordinate Mg(2+). The Proton donor/acceptor role is filled by H181.

This sequence belongs to the RNase T family. As to quaternary structure, homodimer. The cofactor is Mg(2+).

Functionally, trims short 3' overhangs of a variety of RNA species, leaving a one or two nucleotide 3' overhang. Responsible for the end-turnover of tRNA: specifically removes the terminal AMP residue from uncharged tRNA (tRNA-C-C-A). Also appears to be involved in tRNA biosynthesis. This Cronobacter sakazakii (strain ATCC BAA-894) (Enterobacter sakazakii) protein is Ribonuclease T.